A 547-amino-acid polypeptide reads, in one-letter code: uncharacterized protein (547 aa).

The protein to B.pertussis prn N-terminal region.

This is an uncharacterized protein from Escherichia coli O157:H7.